The following is a 605-amino-acid chain: Elongation factor 4 (605 aa).

The region spanning 9–192 (NRIRNFCIIA…AIVQRIPAPA (184 aa)) is the tr-type G domain. GTP-binding positions include 21–26 (DHGKST) and 139–142 (NKID).

This sequence belongs to the TRAFAC class translation factor GTPase superfamily. Classic translation factor GTPase family. LepA subfamily.

It is found in the cell inner membrane. It catalyses the reaction GTP + H2O = GDP + phosphate + H(+). Its function is as follows. Required for accurate and efficient protein synthesis under certain stress conditions. May act as a fidelity factor of the translation reaction, by catalyzing a one-codon backward translocation of tRNAs on improperly translocated ribosomes. Back-translocation proceeds from a post-translocation (POST) complex to a pre-translocation (PRE) complex, thus giving elongation factor G a second chance to translocate the tRNAs correctly. Binds to ribosomes in a GTP-dependent manner. The chain is Elongation factor 4 from Pelodictyon phaeoclathratiforme (strain DSM 5477 / BU-1).